We begin with the raw amino-acid sequence, 473 residues long: Anthocyanidin 5,3-O-glucosyltransferase (473 aa).

This sequence belongs to the UDP-glycosyltransferase family.

Its pathway is pigment biosynthesis; anthocyanin biosynthesis. In terms of biological role, sequentially catalyzes two glycosylation steps at the 5-OH and 3-OH positions of anthocyanidin. Unglycosylated anthocyanidin or anthocyanidin 5-O-glucoside, but not anthocyanidin 3-O-glucoside, can be used as glucosyl acceptor. The protein is Anthocyanidin 5,3-O-glucosyltransferase (RhGT1) of Rosa hybrid cultivar.